Consider the following 364-residue polypeptide: Putative agmatine deiminase (364 aa).

Cys355 functions as the Amidino-cysteine intermediate in the catalytic mechanism.

The protein belongs to the agmatine deiminase family.

It carries out the reaction agmatine + H2O = N-carbamoylputrescine + NH4(+). The chain is Putative agmatine deiminase from Mycoplasma capricolum subsp. capricolum (strain California kid / ATCC 27343 / NCTC 10154).